A 337-amino-acid polypeptide reads, in one-letter code: Fructose-1,6-bisphosphatase class 1 (337 aa).

Mg(2+)-binding residues include E89, D112, L114, and D115. Substrate is bound by residues 115-118, N208, Y241, and K271; that span reads DGSS. E277 provides a ligand contact to Mg(2+).

It belongs to the FBPase class 1 family. As to quaternary structure, homotetramer. Mg(2+) is required as a cofactor.

It is found in the cytoplasm. It catalyses the reaction beta-D-fructose 1,6-bisphosphate + H2O = beta-D-fructose 6-phosphate + phosphate. It participates in carbohydrate biosynthesis; gluconeogenesis. This chain is Fructose-1,6-bisphosphatase class 1, found in Yersinia enterocolitica serotype O:8 / biotype 1B (strain NCTC 13174 / 8081).